A 358-amino-acid chain; its full sequence is Phospho-N-acetylmuramoyl-pentapeptide-transferase (358 aa).

10 helical membrane-spanning segments follow: residues 26–46 (TIYA…WIIR), 71–91 (TPTM…LLWA), 93–113 (LTNV…LIGF), 134–154 (MFWQ…TPGF), 170–190 (LGIF…NAVN), 197–217 (GLAI…AYVA), 234–254 (AGEL…FLWF), 261–281 (VFMG…IAVL), 286–306 (ILLV…IFQV), and 335–355 (KIIV…ISTL).

It belongs to the glycosyltransferase 4 family. MraY subfamily. The cofactor is Mg(2+).

The protein resides in the cell inner membrane. The enzyme catalyses UDP-N-acetyl-alpha-D-muramoyl-L-alanyl-gamma-D-glutamyl-meso-2,6-diaminopimeloyl-D-alanyl-D-alanine + di-trans,octa-cis-undecaprenyl phosphate = di-trans,octa-cis-undecaprenyl diphospho-N-acetyl-alpha-D-muramoyl-L-alanyl-D-glutamyl-meso-2,6-diaminopimeloyl-D-alanyl-D-alanine + UMP. The protein operates within cell wall biogenesis; peptidoglycan biosynthesis. Catalyzes the initial step of the lipid cycle reactions in the biosynthesis of the cell wall peptidoglycan: transfers peptidoglycan precursor phospho-MurNAc-pentapeptide from UDP-MurNAc-pentapeptide onto the lipid carrier undecaprenyl phosphate, yielding undecaprenyl-pyrophosphoryl-MurNAc-pentapeptide, known as lipid I. The polypeptide is Phospho-N-acetylmuramoyl-pentapeptide-transferase (Trichlorobacter lovleyi (strain ATCC BAA-1151 / DSM 17278 / SZ) (Geobacter lovleyi)).